The primary structure comprises 245 residues: Orotidine 5'-phosphate decarboxylase (245 aa).

Substrate is bound by residues Asp-22, Lys-44, 71 to 80 (DLKFHDIPNT), Thr-131, Arg-192, Gln-201, Gly-221, and Arg-222. Catalysis depends on Lys-73, which acts as the Proton donor.

Belongs to the OMP decarboxylase family. Type 1 subfamily. As to quaternary structure, homodimer.

The enzyme catalyses orotidine 5'-phosphate + H(+) = UMP + CO2. It participates in pyrimidine metabolism; UMP biosynthesis via de novo pathway; UMP from orotate: step 2/2. Catalyzes the decarboxylation of orotidine 5'-monophosphate (OMP) to uridine 5'-monophosphate (UMP). The protein is Orotidine 5'-phosphate decarboxylase of Escherichia coli O6:K15:H31 (strain 536 / UPEC).